A 304-amino-acid polypeptide reads, in one-letter code: Small glutamine-rich tetratricopeptide repeat-containing protein beta (304 aa).

TPR repeat units lie at residues 15 to 49 (LREQ…SPED), 85 to 118 (ADQL…DPNN), 119 to 152 (AVYY…DSKY), and 153 to 186 (SKAY…DPEN). Lys-131 bears the N6-acetyllysine mark. Residues Ser-293, Ser-295, and Ser-297 each carry the phosphoserine modification.

The protein belongs to the SGT family. As to quaternary structure, homooligomerize.

Its function is as follows. Co-chaperone that binds directly to HSC70 and HSP70 and regulates their ATPase activity. The chain is Small glutamine-rich tetratricopeptide repeat-containing protein beta (SGTB) from Homo sapiens (Human).